Consider the following 406-residue polypeptide: Peptidase T (406 aa).

Position 81 (histidine 81) interacts with Zn(2+). The active site involves aspartate 83. Residue aspartate 142 coordinates Zn(2+). Residue glutamate 176 is the Proton acceptor of the active site. The Zn(2+) site is built by glutamate 177, aspartate 199, and histidine 381.

This sequence belongs to the peptidase M20B family. Zn(2+) is required as a cofactor.

The protein localises to the cytoplasm. It catalyses the reaction Release of the N-terminal residue from a tripeptide.. Cleaves the N-terminal amino acid of tripeptides. The protein is Peptidase T of Streptococcus pneumoniae serotype 2 (strain D39 / NCTC 7466).